Here is a 303-residue protein sequence, read N- to C-terminus: Quinolinate synthase (303 aa).

Iminosuccinate contacts are provided by His24 and Ser41. Cys86 provides a ligand contact to [4Fe-4S] cluster. Residues 112–114 (YVN) and Ser129 contribute to the iminosuccinate site. Residue Cys172 coordinates [4Fe-4S] cluster. Iminosuccinate-binding positions include 198 to 200 (HPE) and Thr215. Cys260 lines the [4Fe-4S] cluster pocket.

This sequence belongs to the quinolinate synthase family. Type 2 subfamily. The cofactor is [4Fe-4S] cluster.

It localises to the cytoplasm. The catalysed reaction is iminosuccinate + dihydroxyacetone phosphate = quinolinate + phosphate + 2 H2O + H(+). It functions in the pathway cofactor biosynthesis; NAD(+) biosynthesis; quinolinate from iminoaspartate: step 1/1. Functionally, catalyzes the condensation of iminoaspartate with dihydroxyacetone phosphate to form quinolinate. In Alkaliphilus metalliredigens (strain QYMF), this protein is Quinolinate synthase.